The sequence spans 1553 residues: Sodium channel protein PaFPC1 (1553 aa).

A disordered region spans residues 1–68 (MADNSPLIRE…SAHPDQALEQ (68 aa)). The Cytoplasmic portion of the chain corresponds to 1–140 (MADNSPLIRE…RVAISTMVQP (140 aa)). Residues 34 to 60 (ENGKTEENKDNSRDKGRGANKDRDGSA) are compositionally biased toward basic and acidic residues. Residues 141–159 (IFSYFIMITILIHCIFMIM) traverse the membrane as a helical segment. The Extracellular segment spans residues 160–165 (PATQTT). The chain crosses the membrane as a helical span at residues 166-186 (YILELVFLSIYTIEVVVKVLA). Topologically, residues 187–200 (RGFILHPFAYLRDP) are cytoplasmic. Residues 201 to 218 (WNWLDFLVTLIGYITLVV) form a helical membrane-spanning segment. Topologically, residues 219 to 224 (DLGHLY) are extracellular. A helical membrane pass occupies residues 225 to 241 (ALRAFRVLRSWRTVTIV). Residues 242–260 (PGWRTIVDALSLSITSLKD) lie on the Cytoplasmic side of the membrane. The chain crosses the membrane as a helical span at residues 261–280 (LVLLLLFSLFVFAVLGLQIY). At 281-360 (MGVLTQKCVK…PNYGYTSFDT (80 aa)) the chain is on the extracellular side. 2 cysteine pairs are disulfide-bonded: Cys288–Cys337 and Cys328–Cys343. 4 N-linked (GlcNAc...) asparagine glycosylation sites follow: Asn300, Asn308, Asn312, and Asn330. The pore-forming intramembrane region spans 361–385 (FGWAFLSVFRLVTLDYWEDLYQLAL). Saxitoxin is bound at residue Glu378. At 386-392 (RSAGPWH) the chain is on the extracellular side. The helical transmembrane segment at 393–413 (ILFFIIVVFYGTFCFLNFILA) threads the bilayer. Topologically, residues 414-519 (VVVMSYTHMV…GAIGAVVLSP (106 aa)) are cytoplasmic. Residues 520-538 (FFELFIAVIIVLNITFMAL) form a helical membrane-spanning segment. At 539–549 (DHHDMNIEFER) the chain is on the extracellular side. The helical transmembrane segment at 550–569 (ILRTGNYIFTSIYIVEAVLK) threads the bilayer. Topologically, residues 570 to 583 (IIALSPKFYFKDSW) are cytoplasmic. The chain crosses the membrane as a helical span at residues 584 to 603 (NVFDFIIVVFAILELGLEGV). Over 604–605 (QG) the chain is Extracellular. A helical transmembrane segment spans residues 606–623 (LSVFRSFRLLRVFRLAKF). Residues 624-639 (WPTLNNFMSVMTKSYG) lie on the Cytoplasmic side of the membrane. The chain crosses the membrane as a helical span at residues 640–658 (AFVNVMYVMFLLLFIFAII). The Extracellular portion of the chain corresponds to 659–686 (GMQLFGMNYIDNMERFPDGDLPRWNFTD). Residue Asn683 is glycosylated (N-linked (GlcNAc...) asparagine). Residues 687-707 (FLHSFMIVFRALCGEWIESMW) constitute an intramembrane region (pore-forming). Tetrodotoxin is bound by residues Glu701 and Glu704. Glu704 serves as a coordination point for saxitoxin. Over 708 to 719 (DCMLVGDWSCIP) the chain is Extracellular. A disulfide bridge connects residues Cys709 and Cys717. Residues 720–740 (FFVAVFFVGNLVILNLLIALL) form a helical membrane-spanning segment. The Cytoplasmic segment spans residues 741–857 (LNNYGSFCTS…VCFLLAKNKY (117 aa)). The chain crosses the membrane as a helical span at residues 858–875 (FQKFVTAVLVITSVLLAL). The Extracellular portion of the chain corresponds to 876-888 (EDIYLPQRPVLVN). The chain crosses the membrane as a helical span at residues 889–907 (ITLYVDYVLTAFFVIEMII). The Cytoplasmic segment spans residues 908 to 921 (MLFAVGFKKYFTSK). A helical transmembrane segment spans residues 922–940 (WYWLDFIVVVAYLLNFVLM). The Extracellular segment spans residues 941–945 (CAGIE). The chain crosses the membrane as a helical span at residues 946–964 (ALQTLRLLRVFRLFRPLSK). Residues 965-981 (VNGMQVVTSTLVEAVPH) lie on the Cytoplasmic side of the membrane. Residues 982–1001 (IFNVILVGIFFWLVFAIMGV) traverse the membrane as a helical segment. Topologically, residues 1002 to 1047 (QLFAGKFYKCVDENSTVLSHEITMDRNDCLHENYTWENSPMNFDHV) are extracellular. A disulfide bridge connects residues Cys1011 and Cys1030. N-linked (GlcNAc...) asparagine glycosylation occurs at Asn1015. A glycan (N-linked (GlcNAc...) asparagine; atypical) is linked at Asn1028. Asn1034 carries an N-linked (GlcNAc...) asparagine glycan. The segment at residues 1048-1069 (GNAYLSLLQVATFKGWLQIMND) is an intramembrane region (pore-forming). Gly1062 provides a ligand contact to tetrodotoxin. Trp1063 serves as a coordination point for saxitoxin. At 1070-1086 (AIDSREVHKQPIRETNI) the chain is on the extracellular side. A helical membrane pass occupies residues 1087–1108 (YMYLYFIFFIVFGSFFILKLFV). At 1109–1171 (CILIDIFRQQ…LMYDISVNRK (63 aa)) the chain is on the cytoplasmic side. The linker region that may regulate channel inactivation stretch occupies residues 1133 to 1146 (QLIYRRAVMRTMSA). A helical transmembrane segment spans residues 1172–1189 (FEYTMMILIILNVAVMAI). Residues 1190-1200 (DHYGQSMEFSE) are Extracellular-facing. Residues 1201–1219 (VLDYLNLIFIIIFFVECVI) form a helical membrane-spanning segment. Topologically, residues 1220–1231 (KVSGLRHHYFKD) are cytoplasmic. A helical transmembrane segment spans residues 1232 to 1249 (PWNIIDFLYVVLAIAGLM). The Extracellular segment spans residues 1250–1262 (LSDVIEKYFISPT). Residues 1263–1279 (LLRILRILRVGRLLRYF) traverse the membrane as a helical segment. Residues 1280–1298 (QSARGMRLLLLALRKALRT) lie on the Cytoplasmic side of the membrane. A helical transmembrane segment spans residues 1299–1316 (LFNVSFLLFVIMFVYAVF). Over 1317 to 1338 (GMEFFMHIRDAGAIDDVYNFKT) the chain is Extracellular. An intramembrane region (pore-forming) is located at residues 1339–1361 (FGQSIILLFQLATSAGWDGVYFA). Positions 1354 and 1356 each coordinate tetrodotoxin. Residue Asp1356 participates in saxitoxin binding. The Extracellular segment spans residues 1362–1387 (IANEEDCRAPDHELGYPGNCGSRALG). Cys1368 and Cys1381 form a disulfide bridge. The chain crosses the membrane as a helical span at residues 1388–1410 (IAYLVSYLIITCLVVINMYAAVI). At 1411–1553 (LDYVLEVYED…NAWRKHKQQN (143 aa)) the chain is on the cytoplasmic side.

Belongs to the sodium channel (TC 1.A.1.10) family. As to expression, detected in adult nerve cord, muscle, gut and mushroom-shaped accessory glands.

The protein localises to the cell membrane. With respect to regulation, inhibited by the pore blockers saxitoxin and tetrodotoxin. Its function is as follows. Mediates the voltage-dependent sodium ion permeability of excitable membranes. The sequence is that of Sodium channel protein PaFPC1 from Periplaneta americana (American cockroach).